Consider the following 287-residue polypeptide: MKVLLLTGLGALFFAYYWDDNFDPASLHGARVLLTGVSAGIGEELAYHYARLGSHLVLTAHTEALLQQVVGNCRKLGAPKVFYIAADMASPEVPERVVQFALDKLGGLDYLVLNHLGAAPAGTRVRSSQSTRWLMQMNFLSYVQLTSSALPSLTDSKGSLVVVSSLLGRVPTSFSSPYSAAKFALDSFFSSLRRELDVQEVNVAITMCVLGLRDRASAAEGVRGITRVRAAPGPKAALAVIRGGATRASGVFYPWRFHLLCLLRSWMPHSRAWFVRQELNITTPAAA.

The N-terminal stretch at 1 to 15 (MKVLLLTGLGALFFA) is a signal peptide. Residues 36 to 62 (GVSA…TAHT), 87 to 88 (DM), and 114 to 116 (NHL) each bind NADP(+). A substrate-binding site is contributed by serine 165. Residue tyrosine 178 is the Proton acceptor of the active site. Residues 178–182 (YSAAK) and 211–217 (GLRDRAS) each bind NADP(+). An N-linked (GlcNAc...) asparagine glycan is attached at asparagine 280.

Belongs to the short-chain dehydrogenases/reductases (SDR) family.

The protein resides in the secreted. The catalysed reaction is cortisone + NADPH + H(+) = cortisol + NADP(+). Its function is as follows. Unidirectional NADP(+)-dependent cortisol dehydrogenase (in vitro). This Bos taurus (Bovine) protein is Hydroxysteroid 11-beta-dehydrogenase 1-like protein (HSD11B1L).